The sequence spans 827 residues: Glycerol-3-phosphate acyltransferase (827 aa).

The HXXXXD motif signature appears at 325-330 (CHRSHM).

Belongs to the GPAT/DAPAT family.

Its subcellular location is the cell inner membrane. The catalysed reaction is sn-glycerol 3-phosphate + an acyl-CoA = a 1-acyl-sn-glycero-3-phosphate + CoA. It participates in phospholipid metabolism; CDP-diacylglycerol biosynthesis; CDP-diacylglycerol from sn-glycerol 3-phosphate: step 1/3. This Shigella boydii serotype 4 (strain Sb227) protein is Glycerol-3-phosphate acyltransferase.